Reading from the N-terminus, the 308-residue chain is GMP synthase [glutamine-hydrolyzing] subunit B (308 aa).

Positions 1 to 185 (MNWEKFVEEK…LGLPEKIYNR (185 aa)) constitute a GMPS ATP-PPase domain. Residue 28 to 34 (SGGVDSS) coordinates ATP.

In terms of assembly, heterodimer composed of a glutamine amidotransferase subunit (A) and a GMP-binding subunit (B).

It carries out the reaction XMP + L-glutamine + ATP + H2O = GMP + L-glutamate + AMP + diphosphate + 2 H(+). It participates in purine metabolism; GMP biosynthesis; GMP from XMP (L-Gln route): step 1/1. Catalyzes the synthesis of GMP from XMP. The protein is GMP synthase [glutamine-hydrolyzing] subunit B (guaAB) of Pyrococcus abyssi (strain GE5 / Orsay).